Reading from the N-terminus, the 192-residue chain is Probable metallophosphoesterase MJ0623 (192 aa).

A divalent metal cation-binding residues include D41, H43, D70, N92, H115, H144, and H146.

It belongs to the metallophosphoesterase superfamily. YfcE family. Requires a divalent metal cation as cofactor.

The protein is Probable metallophosphoesterase MJ0623 of Methanocaldococcus jannaschii (strain ATCC 43067 / DSM 2661 / JAL-1 / JCM 10045 / NBRC 100440) (Methanococcus jannaschii).